The primary structure comprises 330 residues: MTSPSLLRGFGAYAPERILTNADIESMVETTDEWITTRTGIRQRHVVAPGQTTSDLAVEAARAALADAALDTADITHVLVATCTPDASCPNTACIVARKLGMTGVMALDCNAACSGFLYGLELAQGIVAARPASRVLLVAAEALSLRCNWKDRTTCVLFGDGAGATVVTADVDATQGTAVLEDSIVTSDGSLGDLLTIGGGTANPYAIGDSVGEEYFVRMQGRDVFKHAVRSMTQVCNDLLARNGFTTEDVDLVIPHQANLRIIEAVGDRLGFASEKVFVNVHDFGNTSAASIPLALADARAQGRIRPGMRVLLTTFGGGFTWGAALLRF.

Residues Cys-114 and His-257 contribute to the active site. An ACP-binding region spans residues 258-262 (QANLR). Asn-287 is a catalytic residue.

The protein belongs to the thiolase-like superfamily. FabH family. Homodimer.

It is found in the cytoplasm. The enzyme catalyses malonyl-[ACP] + acetyl-CoA + H(+) = 3-oxobutanoyl-[ACP] + CO2 + CoA. It functions in the pathway lipid metabolism; fatty acid biosynthesis. In terms of biological role, catalyzes the condensation reaction of fatty acid synthesis by the addition to an acyl acceptor of two carbons from malonyl-ACP. Catalyzes the first condensation reaction which initiates fatty acid synthesis and may therefore play a role in governing the total rate of fatty acid production. Possesses both acetoacetyl-ACP synthase and acetyl transacylase activities. Its substrate specificity determines the biosynthesis of branched-chain and/or straight-chain of fatty acids. The chain is Beta-ketoacyl-[acyl-carrier-protein] synthase III from Nitratidesulfovibrio vulgaris (strain ATCC 29579 / DSM 644 / CCUG 34227 / NCIMB 8303 / VKM B-1760 / Hildenborough) (Desulfovibrio vulgaris).